A 511-amino-acid polypeptide reads, in one-letter code: MKFFLLLFTIGFCWAQYSPNTQQGRTSIVHLFEWRWVDIALECERYLAPKGFGGVQVSPPNENVAIHNPFRPWWERYQPVSYKLCTRSGNEDEFRNMVTRCNNVGVRIYVDAVINHMSGNAVSAGTSSTCGSYFNPGSRDFPAVPYSGWDFNDGKCKTGSGDIENYNDATQVRDCRLVGLLDLALEKDYVRSKIAEYMNHLIDIGVAGFRLDASKHMWPGDIKAILDKLHNLNSNWFPAGSKPFIYQEVIDLGGEPIKSSDYFGNGRVTEFKYGAKLGTVIRKWNGEKMSYLKNWGEGWGFMPSDRALVFVDNHDNQRGHGAGGASILTFWDARLYKMAVGFMLAHPYGFTRVMSSYRWPRQFQNGNDVNDWVGPPNNNGVIKEVTINPDTTCGNDWVCEHRWRQIRNMVNFRNVVDGQPFTNWYDNGSNQVAFGRGNRGFIVFNNDDWTFSLTLQTGLPAGTYCDVISGDKINGNCTGIKIYVSDDGKAHFSISNSAEDPFIAIHAESKL.

Positions 1–15 (MKFFLLLFTIGFCWA) are cleaved as a signal peptide. The residue at position 16 (Gln-16) is a Pyrrolidone carboxylic acid. 3 cysteine pairs are disulfide-bonded: Cys-43-Cys-101, Cys-85-Cys-130, and Cys-156-Cys-175. 3 residues coordinate Ca(2+): Asn-115, Arg-173, and Asp-182. Chloride is bound at residue Arg-210. Residue Asp-212 is the Nucleophile of the active site. A Ca(2+)-binding site is contributed by His-216. Catalysis depends on Glu-248, which acts as the Proton donor. Chloride-binding residues include Asn-313 and Arg-352. 2 disulfide bridges follow: Cys-393/Cys-399 and Cys-465/Cys-477.

The protein belongs to the glycosyl hydrolase 13 family. In terms of assembly, monomer. Requires Ca(2+) as cofactor. Chloride is required as a cofactor.

Its subcellular location is the secreted. It carries out the reaction Endohydrolysis of (1-&gt;4)-alpha-D-glucosidic linkages in polysaccharides containing three or more (1-&gt;4)-alpha-linked D-glucose units.. The protein is Alpha-amylase 2B (AMY2B) of Homo sapiens (Human).